Reading from the N-terminus, the 682-residue chain is Kinesin-like protein KIF2A (682 aa).

A globular region spans residues 1–192 (MVTSLNEDSE…LDYRPLTTSD (192 aa)). The segment at 39-129 (LAPDEEIDPG…GKKDFGLASR (91 aa)) is disordered. Over residues 99-115 (IEQSASRQQNGSVSDIS) the composition is skewed to polar residues. The region spanning 198-528 (RICVCVRKRP…LRYANRVKEL (331 aa)) is the Kinesin motor domain. Residue 288–295 (GQTGSGKT) participates in ATP binding. A coiled-coil region spans residues 638 to 673 (QLEAILEKKIDILTELRDKVKSFRAALQEEEHASKQ).

The protein belongs to the TRAFAC class myosin-kinesin ATPase superfamily. Kinesin family. MCAK/KIF2 subfamily. In terms of assembly, interacts with aurka and plk1. Post-translationally, phosphorylation by plk1 promotes location at spindle microtubules and spindle poles, and enhances its microtubule depolymerization activity. In terms of processing, phosphorylation by AURKA interferes with location at spindle microtubules and spindle poles, and inhibits its microtubule depolymerization activity.

The protein localises to the cytoplasm. It localises to the cytoskeleton. Its subcellular location is the microtubule organizing center. It is found in the centrosome. The protein resides in the spindle pole. The protein localises to the spindle. Plus end-directed microtubule-dependent motor. May regulate microtubule dynamics during axonal growth. Required for normal progression through mitosis. Required for normal congress of chromosomes at the metaphase plate. Required for normal spindle dynamics during mitosis. Promotes spindle turnover. Implicated in formation of bipolar mitotic spindles Has microtubule depolymerization activity. This chain is Kinesin-like protein KIF2A (kif2a), found in Xenopus laevis (African clawed frog).